The primary structure comprises 368 residues: Histidinol-phosphate aminotransferase (368 aa).

Lys-229 carries the N6-(pyridoxal phosphate)lysine modification.

This sequence belongs to the class-II pyridoxal-phosphate-dependent aminotransferase family. Histidinol-phosphate aminotransferase subfamily. As to quaternary structure, homodimer. The cofactor is pyridoxal 5'-phosphate.

The enzyme catalyses L-histidinol phosphate + 2-oxoglutarate = 3-(imidazol-4-yl)-2-oxopropyl phosphate + L-glutamate. The protein operates within amino-acid biosynthesis; L-histidine biosynthesis; L-histidine from 5-phospho-alpha-D-ribose 1-diphosphate: step 7/9. This is Histidinol-phosphate aminotransferase from Acidovorax sp. (strain JS42).